Consider the following 53-residue polypeptide: Mannose/glucose-specific lectin alpha 1 chain (53 aa).

This sequence belongs to the leguminous lectin family. In terms of assembly, tetramer of two alpha and two beta chains.

The sequence is that of Mannose/glucose-specific lectin alpha 1 chain from Lathyrus ochrus (Cyprus-vetch).